Here is a 129-residue protein sequence, read N- to C-terminus: uncharacterized protein (129 aa).

The region spanning 3–109 (IFCKIINGEI…IPRYEGDGEV (107 aa)) is the HIT domain. The Histidine triad motif signature appears at 94 to 98 (HVHFH).

This is an uncharacterized protein from Methanocaldococcus jannaschii (strain ATCC 43067 / DSM 2661 / JAL-1 / JCM 10045 / NBRC 100440) (Methanococcus jannaschii).